Consider the following 125-residue polypeptide: Small ribosomal subunit protein uS12 (125 aa).

Positions 9–31 are disordered; sequence RQGREVEKIKSKSPAMENSPQRR. At Asp89 the chain carries 3-methylthioaspartic acid. The tract at residues 105-125 is disordered; the sequence is QGVKDRKQSRSKYGAKRPKAK. Over residues 113–125 the composition is skewed to basic residues; the sequence is SRSKYGAKRPKAK.

Belongs to the universal ribosomal protein uS12 family. In terms of assembly, part of the 30S ribosomal subunit. Contacts proteins S8 and S17. May interact with IF1 in the 30S initiation complex.

In terms of biological role, with S4 and S5 plays an important role in translational accuracy. Functionally, interacts with and stabilizes bases of the 16S rRNA that are involved in tRNA selection in the A site and with the mRNA backbone. Located at the interface of the 30S and 50S subunits, it traverses the body of the 30S subunit contacting proteins on the other side and probably holding the rRNA structure together. The combined cluster of proteins S8, S12 and S17 appears to hold together the shoulder and platform of the 30S subunit. The sequence is that of Small ribosomal subunit protein uS12 from Polaromonas naphthalenivorans (strain CJ2).